Reading from the N-terminus, the 451-residue chain is Bifunctional protein GlmU (451 aa).

The pyrophosphorylase stretch occupies residues 1-236; the sequence is MDQTPSYSPP…YEELRGINSK (236 aa). Residues 17-20, Lys31, Gln79, 84-85, 105-107, Gly144, Glu162, Asn177, and Asn234 contribute to the UDP-N-acetyl-alpha-D-glucosamine site; these read LAAG, GT, and YGD. Position 107 (Asp107) interacts with Mg(2+). Residue Asn234 participates in Mg(2+) binding. Positions 237 to 257 are linker; it reads VELAEAEATVQIVLRRKALEN. The segment at 258 to 451 is N-acetyltransferase; the sequence is GVTMTAPETV…EIRRQLKGSV (194 aa). UDP-N-acetyl-alpha-D-glucosamine-binding residues include Arg323 and Lys341. The active-site Proton acceptor is His353. UDP-N-acetyl-alpha-D-glucosamine-binding residues include Tyr356 and Asn367. Residues Ala370, 376–377, Ser395, Ala413, and Arg430 contribute to the acetyl-CoA site; that span reads NY.

It in the N-terminal section; belongs to the N-acetylglucosamine-1-phosphate uridyltransferase family. The protein in the C-terminal section; belongs to the transferase hexapeptide repeat family. Homotrimer. It depends on Mg(2+) as a cofactor.

The protein localises to the cytoplasm. It catalyses the reaction alpha-D-glucosamine 1-phosphate + acetyl-CoA = N-acetyl-alpha-D-glucosamine 1-phosphate + CoA + H(+). The catalysed reaction is N-acetyl-alpha-D-glucosamine 1-phosphate + UTP + H(+) = UDP-N-acetyl-alpha-D-glucosamine + diphosphate. The protein operates within nucleotide-sugar biosynthesis; UDP-N-acetyl-alpha-D-glucosamine biosynthesis; N-acetyl-alpha-D-glucosamine 1-phosphate from alpha-D-glucosamine 6-phosphate (route II): step 2/2. It participates in nucleotide-sugar biosynthesis; UDP-N-acetyl-alpha-D-glucosamine biosynthesis; UDP-N-acetyl-alpha-D-glucosamine from N-acetyl-alpha-D-glucosamine 1-phosphate: step 1/1. Its pathway is bacterial outer membrane biogenesis; LPS lipid A biosynthesis. Its function is as follows. Catalyzes the last two sequential reactions in the de novo biosynthetic pathway for UDP-N-acetylglucosamine (UDP-GlcNAc). The C-terminal domain catalyzes the transfer of acetyl group from acetyl coenzyme A to glucosamine-1-phosphate (GlcN-1-P) to produce N-acetylglucosamine-1-phosphate (GlcNAc-1-P), which is converted into UDP-GlcNAc by the transfer of uridine 5-monophosphate (from uridine 5-triphosphate), a reaction catalyzed by the N-terminal domain. The sequence is that of Bifunctional protein GlmU from Granulibacter bethesdensis (strain ATCC BAA-1260 / CGDNIH1).